The following is a 277-amino-acid chain: MEFKAFIEITRPHNCLLAGIVGVLGSIVAAGGLPELKTAILVFLVVFLGCAGGNTINDYFDYEIDKINRPERPLPRGAMSRKAALWYSVALFATGIVLAWFINIWDFLLAIVAYVTMFIYAWKLKPMPFIGNVVVASLTGATPLYGAIAVGEIGLAGTLALCAFLVNVAREVIKDIEDIEGDMAKGAKTLPILIGRKRAAYVGALFAILTVVASFLPIKAGIGLGYLAMLPVDAVILYSAFLILRSQDRETAHRAQILLKVSVFLAVVAFLIASLVR.

Transmembrane regions (helical) follow at residues 16-36 (LLAGIVGVLGSIVAAGGLPEL), 40-60 (ILVFLVVFLGCAGGNTINDYF), 83-105 (AALWYSVALFATGIVLAWFINIW), 107-124 (FLLAIVAYVTMFIYAWKL), 146-166 (GAIAVGEIGLAGTLALCAFLV), 202-222 (VGALFAILTVVASFLPIKAGI), 224-244 (LGYLAMLPVDAVILYSAFLIL), and 256-276 (QILLKVSVFLAVVAFLIASLV).

This sequence belongs to the UbiA prenyltransferase family. DGGGP synthase subfamily. Mg(2+) serves as cofactor.

The protein resides in the cell membrane. It catalyses the reaction sn-3-O-(geranylgeranyl)glycerol 1-phosphate + (2E,6E,10E)-geranylgeranyl diphosphate = 2,3-bis-O-(geranylgeranyl)-sn-glycerol 1-phosphate + diphosphate. It participates in membrane lipid metabolism; glycerophospholipid metabolism. In terms of biological role, prenyltransferase that catalyzes the transfer of the geranylgeranyl moiety of geranylgeranyl diphosphate (GGPP) to the C2 hydroxyl of (S)-3-O-geranylgeranylglyceryl phosphate (GGGP). This reaction is the second ether-bond-formation step in the biosynthesis of archaeal membrane lipids. This is Digeranylgeranylglyceryl phosphate synthase from Thermococcus kodakarensis (strain ATCC BAA-918 / JCM 12380 / KOD1) (Pyrococcus kodakaraensis (strain KOD1)).